A 129-amino-acid polypeptide reads, in one-letter code: Small ribosomal subunit protein uS11 (129 aa).

It belongs to the universal ribosomal protein uS11 family. As to quaternary structure, part of the 30S ribosomal subunit. Interacts with proteins S7 and S18. Binds to IF-3.

Located on the platform of the 30S subunit, it bridges several disparate RNA helices of the 16S rRNA. Forms part of the Shine-Dalgarno cleft in the 70S ribosome. This is Small ribosomal subunit protein uS11 from Chelativorans sp. (strain BNC1).